We begin with the raw amino-acid sequence, 65 residues long: Large ribosomal subunit protein bL35 (65 aa).

This sequence belongs to the bacterial ribosomal protein bL35 family.

In Proteus mirabilis (strain HI4320), this protein is Large ribosomal subunit protein bL35.